We begin with the raw amino-acid sequence, 295 residues long: Release factor glutamine methyltransferase (295 aa).

Residues 127 to 131 (GTGSG), Asp150, Phe179, and Asn195 contribute to the S-adenosyl-L-methionine site. Position 195–198 (195–198 (NPPY)) interacts with substrate.

It belongs to the protein N5-glutamine methyltransferase family. PrmC subfamily.

The catalysed reaction is L-glutaminyl-[peptide chain release factor] + S-adenosyl-L-methionine = N(5)-methyl-L-glutaminyl-[peptide chain release factor] + S-adenosyl-L-homocysteine + H(+). In terms of biological role, methylates the class 1 translation termination release factors RF1/PrfA and RF2/PrfB on the glutamine residue of the universally conserved GGQ motif. The polypeptide is Release factor glutamine methyltransferase (Nitratidesulfovibrio vulgaris (strain ATCC 29579 / DSM 644 / CCUG 34227 / NCIMB 8303 / VKM B-1760 / Hildenborough) (Desulfovibrio vulgaris)).